Reading from the N-terminus, the 283-residue chain is MLRIAVQSKGRLYDETMMLLEEAGIKLNRGKRILLLSAKGFPVEVLFLRDDDIPQSVANGVADIGIVGENEYVEKGQEAKLIKRLGFSKCRLSLAIPKDEEYKGAEWFEGKTIATSYPAILRSFLEERGVKADIHVISGSVEIAPGIGLADAIFDIVSSGSTLVSNQLREVEVVLPCEALLIANNNLSKEKLEILDELLFRFEAIQVAEGKKYVLLNAPKEKLDEIIEVLPGMKSPTITPLANDEWVSVQSVIAEKHFWEIIGKLKSLGAEGILVLPIEKMIV.

The protein belongs to the ATP phosphoribosyltransferase family. Long subfamily. Requires Mg(2+) as cofactor.

The protein localises to the cytoplasm. The enzyme catalyses 1-(5-phospho-beta-D-ribosyl)-ATP + diphosphate = 5-phospho-alpha-D-ribose 1-diphosphate + ATP. Its pathway is amino-acid biosynthesis; L-histidine biosynthesis; L-histidine from 5-phospho-alpha-D-ribose 1-diphosphate: step 1/9. With respect to regulation, feedback inhibited by histidine. In terms of biological role, catalyzes the condensation of ATP and 5-phosphoribose 1-diphosphate to form N'-(5'-phosphoribosyl)-ATP (PR-ATP). Has a crucial role in the pathway because the rate of histidine biosynthesis seems to be controlled primarily by regulation of HisG enzymatic activity. This is ATP phosphoribosyltransferase from Parabacteroides distasonis (strain ATCC 8503 / DSM 20701 / CIP 104284 / JCM 5825 / NCTC 11152).